Consider the following 367-residue polypeptide: Apolipoprotein A-V (367 aa).

A signal peptide spans 1 to 20; that stretch reads MAAVITWALALLSVFATVQA. S52 is subject to Phosphoserine. Residues 231-255 are a coiled coil; that stretch reads TRKAKDLHTSIQRNLDQLRDELSTF. Residues 305-332 are disordered; the sequence is EEIQHQLAPPPPSHSAFAPELGHSDSNK.

This sequence belongs to the apolipoprotein A1/A4/E family. In terms of assembly, interacts with GPIHBP1. Interacts with SORL1; this interaction leads to APOA5 internalization and sorting either to lysosomes and degradation, or to the trans-Golgi network. In terms of processing, phosphorylated by FAM20C in the extracellular medium. As to expression, liver.

The protein localises to the secreted. The protein resides in the early endosome. It localises to the late endosome. Its subcellular location is the golgi apparatus. It is found in the trans-Golgi network. Functionally, minor apolipoprotein mainly associated with HDL and to a lesser extent with VLDL. May also be associated with chylomicrons. Important determinant of plasma triglyceride (TG) levels by both being a potent stimulator of apo-CII lipoprotein lipase (LPL) TG hydrolysis and an inhibitor of the hepatic VLDL-TG production rate (without affecting the VLDL-apoB production rate). Activates poorly lecithin:cholesterol acyltransferase (LCAT) and does not enhance efflux of cholesterol from macrophages. Binds heparin. The protein is Apolipoprotein A-V (Apoa5) of Rattus norvegicus (Rat).